The primary structure comprises 199 residues: dITP/XTP pyrophosphatase (199 aa).

8 to 13 (TSNINK) provides a ligand contact to substrate. Residue Asp68 is the Proton acceptor of the active site. Asp68 is a binding site for Mg(2+). Substrate is bound by residues Ser69, 155–158 (FGYN), Lys177, and 182–183 (HR).

Belongs to the HAM1 NTPase family. As to quaternary structure, homodimer. The cofactor is Mg(2+).

It carries out the reaction XTP + H2O = XMP + diphosphate + H(+). The enzyme catalyses dITP + H2O = dIMP + diphosphate + H(+). It catalyses the reaction ITP + H2O = IMP + diphosphate + H(+). Functionally, pyrophosphatase that catalyzes the hydrolysis of nucleoside triphosphates to their monophosphate derivatives, with a high preference for the non-canonical purine nucleotides XTP (xanthosine triphosphate), dITP (deoxyinosine triphosphate) and ITP. Seems to function as a house-cleaning enzyme that removes non-canonical purine nucleotides from the nucleotide pool, thus preventing their incorporation into DNA/RNA and avoiding chromosomal lesions. The chain is dITP/XTP pyrophosphatase from Borrelia recurrentis (strain A1).